We begin with the raw amino-acid sequence, 125 residues long: Acyl carrier protein, mitochondrial (125 aa).

The transit peptide at 1 to 36 (MFRSVCRISSRVAPSAYRTIMGRSVMSNTILAQRFY) directs the protein to the mitochondrion. The Carrier domain maps to 43–122 (DQVSQRVIDV…ETVDYIASNP (80 aa)). Serine 82 is subject to O-(pantetheine 4'-phosphoryl)serine.

It belongs to the acyl carrier protein (ACP) family. In terms of assembly, complex I is composed of about 30 different subunits. Post-translationally, 4'-phosphopantetheine is transferred from CoA to a specific serine of apo-ACP by acpS. This modification is essential for activity because fatty acids are bound in thioester linkage to the sulfhydryl of the prosthetic group.

Its subcellular location is the mitochondrion. It functions in the pathway lipid metabolism; fatty acid biosynthesis. Functionally, carrier of the growing fatty acid chain in fatty acid biosynthesis. May be involved in the synthesis of very-long-chain fatty acids. Accessory and non-catalytic subunit of the mitochondrial membrane respiratory chain NADH dehydrogenase (Complex I), which functions in the transfer of electrons from NADH to the respiratory chain. The protein is Acyl carrier protein, mitochondrial (ACP1) of Saccharomyces cerevisiae (strain ATCC 204508 / S288c) (Baker's yeast).